The following is a 1187-amino-acid chain: DNA excision repair protein CSB (1187 aa).

Polar residues predominate over residues 31–43; it reads QATTDPADSSGPT. 4 disordered regions span residues 31 to 53, 75 to 102, 217 to 242, and 265 to 351; these read QATT…PDDA, IKGA…HHGA, KRVE…MEAS, and DSES…EGSD. Composition is skewed to basic and acidic residues over residues 92–101 and 217–230; these read KGKDQPDHHG and KRVE…RQDD. Over residues 300-319 the composition is skewed to basic residues; the sequence is KRPRNKTKRPLPGKKWRKAN. The segment covering 339-351 has biased composition (acidic residues); sequence SDDDEDQVTEGSD. Residues 384 to 580 form the Helicase ATP-binding domain; that stretch reads WELHCQRAGG…WSLFDFVFPG (197 aa). An ATP-binding site is contributed by 397–404; sequence DEMGLGKT. A disordered region spans residues 457-480; sequence SSSKKSKRSSDSDSEASWDSDQEE. Residues 468–480 show a composition bias toward acidic residues; the sequence is SDSEASWDSDQEE. The DEGH box motif lies at 531 to 534; that stretch reads DEGH. Residues 716 to 876 form the Helicase C-terminal domain; that stretch reads KVVEQVLKVW…RRFFKARDMK (161 aa). Disordered regions lie at residues 916-945 and 1095-1116; these read LYAA…HCPD and GSAS…SSTR. Residues 918–933 show a composition bias toward low complexity; the sequence is AASATPTTSGTEPSSS.

The protein belongs to the SNF2/RAD54 helicase family. As to quaternary structure, homodimer. Binds DNA. Expressed in proliferating tissues. Highly expressed in shoot apical meristem (SAM). Expressed in roots, young leaves, flag leaves, and panicles. Expressed at very low levels in mature leaves.

Its subcellular location is the nucleus. Functionally, essential factor involved in transcription-coupled nucleotide excision repair (TCR) which allows RNA polymerase II-blocking lesions to be rapidly removed from the transcribed strand of active genes. Upon DNA-binding, it locally modifies DNA conformation by wrapping the DNA around itself, thereby modifying the interface between stalled RNA polymerase II and DNA. It is required for transcription-coupled repair complex formation. This chain is DNA excision repair protein CSB, found in Oryza sativa subsp. japonica (Rice).